The sequence spans 487 residues: Acetyl-coenzyme A carboxylase carboxyl transferase subunit beta, chloroplastic (487 aa).

A CoA carboxyltransferase N-terminal domain is found at 223 to 487 (LWIQCDNCYG…FFPLKKNEIK (265 aa)). Positions 227, 230, 243, and 246 each coordinate Zn(2+). The segment at 227-246 (CDNCYGLMYKKVKMNVCEQC) adopts a C4-type zinc-finger fold.

Belongs to the AccD/PCCB family. Acetyl-CoA carboxylase is a heterohexamer composed of biotin carboxyl carrier protein, biotin carboxylase and 2 subunits each of ACCase subunit alpha and ACCase plastid-coded subunit beta (accD). Zn(2+) is required as a cofactor.

Its subcellular location is the plastid. It localises to the chloroplast stroma. The catalysed reaction is N(6)-carboxybiotinyl-L-lysyl-[protein] + acetyl-CoA = N(6)-biotinyl-L-lysyl-[protein] + malonyl-CoA. It participates in lipid metabolism; malonyl-CoA biosynthesis; malonyl-CoA from acetyl-CoA: step 1/1. In terms of biological role, component of the acetyl coenzyme A carboxylase (ACC) complex. Biotin carboxylase (BC) catalyzes the carboxylation of biotin on its carrier protein (BCCP) and then the CO(2) group is transferred by the transcarboxylase to acetyl-CoA to form malonyl-CoA. This chain is Acetyl-coenzyme A carboxylase carboxyl transferase subunit beta, chloroplastic, found in Lepidium virginicum (Virginia pepperweed).